The primary structure comprises 133 residues: Meiotically up-regulated gene 15 protein (133 aa).

Its subcellular location is the cytoplasm. It localises to the nucleus. Its function is as follows. Has a role in meiosis. The protein is Meiotically up-regulated gene 15 protein (mug15) of Schizosaccharomyces pombe (strain 972 / ATCC 24843) (Fission yeast).